The primary structure comprises 261 residues: Claudin-18 (261 aa).

The Cytoplasmic portion of the chain corresponds to 1–6 (MSTTTC). Residues 7-27 (QVVAFLLSILGLAGCIAATGM) traverse the membrane as a helical segment. Residues 28-80 (DMWSTQDLYDNPVTSVFQYEGLWRSCVRQSSGFTECRPYFTILGLPAMLQAVR) are Extracellular-facing. Residues 81 to 101 (ALMIVGIVLGAIGLLVSIFAL) traverse the membrane as a helical segment. Residues 102–122 (KCIRIGSMEDSAKANMTLTSG) lie on the Cytoplasmic side of the membrane. A helical transmembrane segment spans residues 123–143 (IMFIVSGLCAIAGVSVFANML). The Extracellular portion of the chain corresponds to 144–174 (VTNFWMSTANMYTGMGGMVQTVQTRYTFGAA). The helical transmembrane segment at 175-195 (LFVGWVAGGLTLIGGVMMCIA) threads the bilayer. The segment at 195 to 261 (ACRGLAPEET…QSYPSKHDYV (67 aa)) is required for role in regulation of RANKL-induced osteoclast differentiation. The Cytoplasmic portion of the chain corresponds to 196–261 (CRGLAPEETN…QSYPSKHDYV (66 aa)). Ser214 carries the phosphoserine modification. The tract at residues 242–261 (DGGARTEDEVQSYPSKHDYV) is disordered.

Belongs to the claudin family. As to quaternary structure, interacts with TJP2/ZO-2. Interacts with TJP1/ZO-1. Interacts with YAP1 (phosphorylated); the interaction sequesters YAP1 away from the nucleus and thereby restricts transcription of YAP1 target genes. In terms of assembly, interacts with CLDN19. As to expression, expression is restricted to the lung. In terms of tissue distribution, expression is restricted to the stomach mucosa where it is predominantly observed in the epithelial cells of the pit region and the base of the gastric glands including exocrine and endocrine cells (at protein level).

Its subcellular location is the cell junction. The protein resides in the tight junction. It localises to the cell membrane. It is found in the lateral cell membrane. In terms of biological role, involved in alveolar fluid homeostasis via regulation of alveolar epithelial tight junction composition and therefore ion transport and solute permeability, potentially via downstream regulation of the actin cytoskeleton organization and beta-2-adrenergic signaling. Required for lung alveolarization and maintenance of the paracellular alveolar epithelial barrier. Acts to maintain epithelial progenitor cell proliferation and organ size, via regulation of YAP1 localization away from the nucleus and thereby restriction of YAP1 target gene transcription. Acts as a negative regulator of RANKL-induced osteoclast differentiation, potentially via relocation of TJP2/ZO-2 away from the nucleus, subsequently involved in bone resorption in response to calcium deficiency. Mediates the osteoprotective effects of estrogen, potentially via acting downstream of estrogen signaling independently of RANKL signaling pathways. Involved in the maintenance of homeostasis of the alveolar microenvironment via regulation of pH and subsequent T-cell activation in the alveolar space, is therefore indirectly involved in limiting C.neoformans infection. Its function is as follows. Required for the formation of the gastric paracellular barrier via its role in tight junction formation, thereby involved in the response to gastric acidification. The sequence is that of Claudin-18 (CLDN18) from Homo sapiens (Human).